The primary structure comprises 422 residues: Aspartate--tRNA(Asp/Asn) ligase (422 aa).

Residue glutamate 158 coordinates L-aspartate. Residues 180 to 183 form an aspartate region; the sequence is QLYK. Arginine 201 is a binding site for L-aspartate. Residues 201–203, 209–211, and glutamate 345 each bind ATP; these read RME and RHL. Residues serine 348 and arginine 352 each coordinate L-aspartate. Residue 393 to 396 coordinates ATP; it reads GAER.

Belongs to the class-II aminoacyl-tRNA synthetase family. Type 2 subfamily. In terms of assembly, homodimer. Makes part of a ribonucleoprotein particle (RNP) called transamidosome that allows channelling of the aa-tRNA from non-discriminating aspartyl-tRNA synthetase active site to the GatCAB amidotransferase site. The transamidosome complex is formed by two GatCABs, one dimeric ND-AspRSs and two tRNAs(Asn) molecules.

It localises to the cytoplasm. The enzyme catalyses tRNA(Asx) + L-aspartate + ATP = L-aspartyl-tRNA(Asx) + AMP + diphosphate. Aspartyl-tRNA synthetase with relaxed tRNA specificity since it is able to aspartylate not only its cognate tRNA(Asp) but also tRNA(Asn) with similar efficiencies. Reaction proceeds in two steps: L-aspartate is first activated by ATP to form Asp-AMP and then transferred to the acceptor end of tRNA(Asp/Asn). This is Aspartate--tRNA(Asp/Asn) ligase (aspS2) from Thermus thermophilus (strain ATCC 27634 / DSM 579 / HB8).